Here is a 376-residue protein sequence, read N- to C-terminus: Mitogen-activated protein kinase ERK-A (376 aa).

In terms of domain architecture, Protein kinase spans 38–326 (YIKLAYIGEG…VEEALAHPYL (289 aa)). ATP is bound by residues 44-52 (IGEGAYGMV) and K67. The active-site Proton acceptor is D162. T198 carries the post-translational modification Phosphothreonine. Positions 198-200 (TEY) match the TXY motif. Y200 bears the Phosphotyrosine mark.

It belongs to the protein kinase superfamily. CMGC Ser/Thr protein kinase family. MAP kinase subfamily. Mg(2+) is required as a cofactor. In terms of processing, dually phosphorylated on Thr-198 and Tyr-200, which activates the enzyme. Phosphorylated on tyrosine residue(s) in response to insulin. In terms of tissue distribution, in third instar larvae, expressed in eye imaginal disks. In adults, expressed in head and body.

It localises to the cytoplasm. The protein localises to the nucleus. It catalyses the reaction L-seryl-[protein] + ATP = O-phospho-L-seryl-[protein] + ADP + H(+). It carries out the reaction L-threonyl-[protein] + ATP = O-phospho-L-threonyl-[protein] + ADP + H(+). Its activity is regulated as follows. Activated by tyrosine and threonine phosphorylation. Its function is as follows. Serine/threonine kinase which acts as an essential component of the MAP kinase signal transduction pathway to regulate proliferation, differentiation and effect cell fate decisions in various tissues. Required downstream of phl/Raf in the sev/sevenless, tor/torso, and EGF receptor homolog Egfr signal transduction pathways. Required for embryonic epithelial tissue repair. During larval development, mediates Ptth/tor signaling leading to the production of ecdysone, a hormone required for the initiation of metamorphosis. The polypeptide is Mitogen-activated protein kinase ERK-A (Drosophila melanogaster (Fruit fly)).